We begin with the raw amino-acid sequence, 170 residues long: Cyclic pyranopterin monophosphate synthase (170 aa).

Residues 1–25 (MADPSTLTHPDPEGGVRMMDASQKS) form a disordered region. Substrate contacts are provided by residues 78–80 (LCH) and 116–117 (ME). The active site involves Asp-131.

It belongs to the MoaC family. Homohexamer; trimer of dimers.

It catalyses the reaction (8S)-3',8-cyclo-7,8-dihydroguanosine 5'-triphosphate = cyclic pyranopterin phosphate + diphosphate. The protein operates within cofactor biosynthesis; molybdopterin biosynthesis. In terms of biological role, catalyzes the conversion of (8S)-3',8-cyclo-7,8-dihydroguanosine 5'-triphosphate to cyclic pyranopterin monophosphate (cPMP). In Salinibacter ruber (strain DSM 13855 / M31), this protein is Cyclic pyranopterin monophosphate synthase.